A 70-amino-acid chain; its full sequence is Small ribosomal subunit protein bS21 (70 aa).

The protein belongs to the bacterial ribosomal protein bS21 family.

This is Small ribosomal subunit protein bS21 from Azoarcus sp. (strain BH72).